Consider the following 277-residue polypeptide: Protein RKD3 (277 aa).

Positions 142 to 226 (KRIIMKRRYR…LGNTKGRTPK (85 aa)) constitute an RWP-RK domain. Positions 201–246 (RKLTSLNALIANLKDLLGNTKGRTPKSKLRNALELLEMEKKMIEEV) form a coiled coil.

The protein localises to the nucleus. In terms of biological role, putative transcription factor. The protein is Protein RKD3 (RKD3) of Arabidopsis thaliana (Mouse-ear cress).